Reading from the N-terminus, the 379-residue chain is Histone-lysine N-methyltransferase ATXR5 (379 aa).

Residues 1–15 (MATWNASSPAASPCS) show a composition bias toward low complexity. Positions 1–42 (MATWNASSPAASPCSSRRRTKAPARRPSSESPPPRKMKSMAE) are disordered. The N-terminal 44 residues, 1–44 (MATWNASSPAASPCSSRRRTKAPARRPSSESPPPRKMKSMAEIM), are a transit peptide targeting the chloroplast. The PHD-type zinc finger occupies 64 to 114 (NVTCEKCGSGEGDDELLLCDKCDRGFHMKCLRPIVVRVPIGTWLCVDCSDQ). A PIP motif motif is present at residues 122–129 (QKKILHFF). A substrate-binding site is contributed by Met-221. The SET domain occupies 245–367 (PPLVVVFDPL…KGERLYYDYN (123 aa)). S-adenosyl-L-methionine is bound by residues 255–257 (EGY) and 317–321 (RFING). Residue Arg-339 coordinates substrate. S-adenosyl-L-methionine is bound at residue Tyr-366. Residue 369–370 (YE) participates in substrate binding. Residue Tyr-373 participates in S-adenosyl-L-methionine binding.

This sequence belongs to the class V-like SAM-binding methyltransferase superfamily. Histone-lysine methyltransferase family. TRX/MLL subfamily. As to quaternary structure, isoform 1 but not isoform 2 interacts with PCNA1 and PCNA2. Interacts (via PHD domain) with HTR1 (via N-terminus). Isoform 2 interacts with IPS1. As to expression, expressed in leaves, roots, stems, flowers, siliques and developing pollen. Up-regulated in tissues where cell division is active.

The protein localises to the nucleus. It localises to the plastid. It is found in the chloroplast. The enzyme catalyses L-lysyl(27)-[histone H3] + S-adenosyl-L-methionine = N(6)-methyl-L-lysyl(27)-[histone H3] + S-adenosyl-L-homocysteine + H(+). Its function is as follows. Histone methyltransferase that specifically monomethylates 'Lys-27' of histone H3 (H3K27me1). Has much higher activity on nucleosomes containing H3.1 than H3.3. Involved in the formation of constitutive heterochromatin and the silencing of heterochromatic elements. Influences which sets of rRNA gene variants are expressed or silenced. This is Histone-lysine N-methyltransferase ATXR5 (ATXR5) from Arabidopsis thaliana (Mouse-ear cress).